The following is a 328-amino-acid chain: GTP cyclohydrolase MptA (328 aa).

The protein belongs to the GTP cyclohydrolase IV family. In terms of assembly, homodimer. Fe(2+) serves as cofactor.

It carries out the reaction GTP + H2O = 7,8-dihydroneopterin 2',3'-cyclic phosphate + formate + diphosphate + H(+). It functions in the pathway cofactor biosynthesis; 5,6,7,8-tetrahydromethanopterin biosynthesis. In terms of biological role, converts GTP to 7,8-dihydro-D-neopterin 2',3'-cyclic phosphate, the first intermediate in the biosynthesis of coenzyme methanopterin. The chain is GTP cyclohydrolase MptA from Methanospirillum hungatei JF-1 (strain ATCC 27890 / DSM 864 / NBRC 100397 / JF-1).